A 59-amino-acid chain; its full sequence is Cecropin-A (59 aa).

A signal peptide spans 1-23 (MNFTKLFLLIAMAVLLLTGQSEA). The propeptide at 58–59 (GK) is removed in mature form (AeaeCec2).

As to expression, hemolymph (at protein level).

The protein resides in the secreted. In terms of biological role, antimicrobial peptide. Antibacterial activity against Gram-negative bacteria E.coli D22 and D31, E.carotovora, K.pneumoniae, P.aeruginosa, S.typhimurium, E.cloacae B12 and X.campestris and Gram-positive bacteria A.viridans, M.luteus, B.megaterium and S.pyogenes. Possesses antifungal activity against F.oxysporum, F.culmorum and N.crassa, C.albicans, C.neoformans and S.cerevisiae. No activity against Gram-negative S.marcescens Db11, Gram-positive B.cereus, B.subtilis, B.thuringiensis, S.aureus and L.monocytogenes, the fungi A.fumigatus and B.bassiana and C.glabrata. Partially neutralizes lipopolysaccharides (LPS). Exhibits anti-inflammatory properties: inhibits LPS-induced iNOS/NOS2 transcription, nitric oxide (NO) and pro-inflammatory cytokine production in mouse macrophages and human peripheral blood mononuclear cells (PBMCs); inhibits LPS-induced activation of MAPK and NF-kappa-B signaling pathways in mouse macrophages. The protein is Cecropin-A (CECA) of Aedes aegypti (Yellowfever mosquito).